Reading from the N-terminus, the 890-residue chain is MNQEEAIFRSADMTYVQLYIPLEVIREVTFLLGKMSVFMVMDLNKDLTAFQRGYVNQLRRFDEVERMVGFLNEVVEKHAAETWKYILHIDDEGNDIAQPDMADLINTMEPLSLENVNDMVKEITDCESRARQLDESLDSLRSKLNDLLEQRQVIFECSKFIEVNPGIAGRATNPEIEQEERDVDEFRMTPDDISETLSDAFSFDDETPQDRGALGNDLTRNQSVEDLSFLEQGYQHRYMITGSIRRTKVDILNRILWRLLRGNLIFQNFPIEEPLLEGKEKVEKDCFIIFTHGETLLKKVKRVIDSLNGKIVSLNTRSSELVDTLNRQIDDLQRILDTTEQTLHTELLVIHDQLPVWSAMTKREKYVYTTLNKFQQESQGLIAEGWVPSTELIHLQDSLKDYIETLGSEYSTVFNVILTNKLPPTYHRTNKFTQAFQSIVDAYGIATYKEINAGLATVVTFPFMFAIMFGDMGHGFILFLMALFLVLNERKFGAMHRDEIFDMAFTGRYVLLLMGAFSVYTGLLYNDIFSKSMTIFKSGWQWPSTFRKGESIEAKKTGVYPFGLDFAWHGTDNGLLFSNSYKMKLSILMGYAHMTYSFMFSYINYRAKNSKVDIIGNFIPGLVFMQSIFGYLSWAIVYKWSKDWIKDDKPAPGLLNMLINMFLAPGTIDDQLYSGQAKLQVVLLLAALVCVPWLLLYKPLTLRRLNKNGGGGRPHGYQSVGNIEHEEQIAQQRHSAEGFQGMIISDVASVADSINESVGGGEQGPFNFGDVMIHQVIHTIEFCLNCISHTASYLRLWALSLAHAQLSSVLWDMTISNAFSSKNSGSPLAVMKVVFLFAMWFVLTVCILVFMEGTSAMLHALRLHWVEAMSKFFEGEGYAYEPFSFRAIIE.

At Met1 the chain carries N-acetylmethionine. Residues 1-450 (MNQEEAIFRS…DAYGIATYKE (450 aa)) are Cytoplasmic-facing. Residues 113–154 (LENVNDMVKEITDCESRARQLDESLDSLRSKLNDLLEQRQVI) are a coiled coil. A phosphoserine mark is found at Ser223 and Ser228. Positions 297–347 (LKKVKRVIDSLNGKIVSLNTRSSELVDTLNRQIDDLQRILDTTEQTLHTEL) form a coiled coil. Residues 451 to 469 (INAGLATVVTFPFMFAIMF) form a helical membrane-spanning segment. The Vacuolar segment spans residues 470–471 (GD). Residues 472–488 (MGHGFILFLMALFLVLN) form a helical membrane-spanning segment. Residues 489 to 502 (ERKFGAMHRDEIFD) lie on the Cytoplasmic side of the membrane. The chain crosses the membrane as a helical span at residues 503–532 (MAFTGRYVLLLMGAFSVYTGLLYNDIFSKS). Over 533 to 580 (MTIFKSGWQWPSTFRKGESIEAKKTGVYPFGLDFAWHGTDNGLLFSNS) the chain is Vacuolar. A helical transmembrane segment spans residues 581 to 600 (YKMKLSILMGYAHMTYSFMF). Topologically, residues 601-618 (SYINYRAKNSKVDIIGNF) are cytoplasmic. Residues 619 to 639 (IPGLVFMQSIFGYLSWAIVYK) form a helical membrane-spanning segment. The Vacuolar portion of the chain corresponds to 640-682 (WSKDWIKDDKPAPGLLNMLINMFLAPGTIDDQLYSGQAKLQVV). Residues 683 to 702 (LLLAALVCVPWLLLYKPLTL) traverse the membrane as a helical segment. Over 703–779 (RRLNKNGGGG…DVMIHQVIHT (77 aa)) the chain is Cytoplasmic. Residues 780–804 (IEFCLNCISHTASYLRLWALSLAHA) traverse the membrane as a helical segment. At 805–828 (QLSSVLWDMTISNAFSSKNSGSPL) the chain is on the vacuolar side. The helical transmembrane segment at 829-867 (AVMKVVFLFAMWFVLTVCILVFMEGTSAMLHALRLHWVE) threads the bilayer. Over 868-890 (AMSKFFEGEGYAYEPFSFRAIIE) the chain is Cytoplasmic.

This sequence belongs to the V-ATPase 116 kDa subunit family. In terms of assembly, V-ATPase is a heteromultimeric enzyme composed of a peripheral catalytic V1 complex (components A to H) attached to an integral membrane V0 proton pore complex (components: a, c, c', c'', d, e, f and VOA1). In terms of processing, glycosylated.

Its subcellular location is the endosome membrane. It is found in the golgi apparatus membrane. Subunit of the V0 complex of vacuolar(H+)-ATPase (V-ATPase), a multisubunit enzyme composed of a peripheral complex (V1) that hydrolyzes ATP and a membrane integral complex (V0) that translocates protons. V-ATPase is responsible for acidifying and maintaining the pH of intracellular compartments. Is present only in Golgi- and endosome-residing V-ATPase complexes; enzymes containing this subunit have a 4-fold lower ratio of proton transport to ATP hydrolysis than complexes containing the vacuolar isoform and do not dissociate V1 and V0 in response to glucose depletion. The protein is V-type proton ATPase subunit a, Golgi isoform (STV1) of Saccharomyces cerevisiae (strain ATCC 204508 / S288c) (Baker's yeast).